The primary structure comprises 398 residues: Lysophospholipid acyltransferase LPEAT1 (398 aa).

The tract at residues 1–24 is disordered; the sequence is MESELKDLNSNSNPPSSKEDRPLL. The residue at position 28 (Ser28) is a Phosphoserine. Residues 66-86 traverse the membrane as a helical segment; it reads LAVALVTLVPLRFLLSMSILL. The segment at 158–185 is disordered; it reads RDSDMDSNPKTTSTEINQKGEAATEEPE. Polar residues predominate over residues 163-174; that stretch reads DSNPKTTSTEIN. The HXXXXD motif signature appears at 194 to 199; the sequence is HVSYLD.

The protein belongs to the 1-acyl-sn-glycerol-3-phosphate acyltransferase family.

It is found in the endoplasmic reticulum membrane. The catalysed reaction is a 1-acyl-sn-glycero-3-phosphoethanolamine + an acyl-CoA = a 1,2-diacyl-sn-glycero-3-phosphoethanolamine + CoA. It catalyses the reaction a 1-acyl-sn-glycero-3-phosphate + an acyl-CoA = a 1,2-diacyl-sn-glycero-3-phosphate + CoA. The enzyme catalyses a 1-acyl-sn-glycero-3-phosphocholine + an acyl-CoA = a 1,2-diacyl-sn-glycero-3-phosphocholine + CoA. It carries out the reaction a 1-acyl-sn-glycero-3-phospho-L-serine + an acyl-CoA = a 1,2-diacyl-sn-glycero-3-phospho-L-serine + CoA. It functions in the pathway lipid metabolism; phospholipid metabolism. In terms of biological role, possesses acyl-CoA-dependent lysophospholipid acyltransferase activity with a subset of lysophospholipids as substrates. Exhibits strong acylation activity on lysophosphatidylethanolamine (LPE) and lysophosphatidate (LPA), and lower activity on lysophosphatidylcholine (LPC) and lysophosphatidylserine (LPS). Exhibits acylation activity on both LPE and LPC. Has a preference for 18:1-LPE over 16:0-LPE as acceptor. Palmitoyl-CoA (16:0-CoA) is a better acyl donor than oleoyl-CoA (18:1-CoA). Among several different acyl-CoA species the best acyl donor is palmitoyl-CoA (16:0-CoA). Activity is calcium-independent. Its activity is essential for maintaining adequate levels of phosphatidylethanolamine (PE), LPE and LPC in the cells, which is crucial for plant growth regulation. The polypeptide is Lysophospholipid acyltransferase LPEAT1 (Arabidopsis thaliana (Mouse-ear cress)).